The primary structure comprises 453 residues: Serine--tRNA ligase (453 aa).

249–251 is an L-serine binding site; that stretch reads TSE. Residues 280 to 282 and Val296 each bind ATP; that span reads RKE. Glu303 is a binding site for L-serine. Position 367-370 (367-370) interacts with ATP; sequence EMVS. Position 404 (Thr404) interacts with L-serine.

It belongs to the class-II aminoacyl-tRNA synthetase family. Type-1 seryl-tRNA synthetase subfamily. As to quaternary structure, homodimer. The tRNA molecule binds across the dimer.

It is found in the cytoplasm. The enzyme catalyses tRNA(Ser) + L-serine + ATP = L-seryl-tRNA(Ser) + AMP + diphosphate + H(+). It catalyses the reaction tRNA(Sec) + L-serine + ATP = L-seryl-tRNA(Sec) + AMP + diphosphate + H(+). It participates in aminoacyl-tRNA biosynthesis; selenocysteinyl-tRNA(Sec) biosynthesis; L-seryl-tRNA(Sec) from L-serine and tRNA(Sec): step 1/1. Catalyzes the attachment of serine to tRNA(Ser). Is also able to aminoacylate tRNA(Sec) with serine, to form the misacylated tRNA L-seryl-tRNA(Sec), which will be further converted into selenocysteinyl-tRNA(Sec). The sequence is that of Serine--tRNA ligase from Archaeoglobus fulgidus (strain ATCC 49558 / DSM 4304 / JCM 9628 / NBRC 100126 / VC-16).